The sequence spans 415 residues: Vascular endothelial growth factor C (415 aa).

An N-terminal signal peptide occupies residues 1 to 31 (MHLLCFLSLACSLLAAALIPGPREAPATVAA). Residues 32–107 (FESGLGFSEA…RTGDTVKLAA (76 aa)) constitute a propeptide that is removed on maturation. Cystine bridges form between C127-C169, C158-C205, and C162-C207. N-linked (GlcNAc...) asparagine glycans are attached at residues N171, N201, and N236. Residues 224 to 415 (SLPATLPQCQ…PSYWKRPHLN (192 aa)) constitute a propeptide that is removed on maturation. Tandem repeats lie at residues 276–291 (CGPNKELDEDTCQCVC), 300–315 (CGPHKELDRDSCQCVC), 324–339 (CGANREFDENTCQCVC), and 343–358 (CPRNQPLNPGKCACEC). Positions 276-358 (CGPNKELDED…LNPGKCACEC (83 aa)) are 4 X 16 AA repeats of C-X(10)-C-X-C-X(1,3)-C.

The protein belongs to the PDGF/VEGF growth factor family. In terms of assembly, homodimer; non-covalent and antiparallel. Interacts with FLT4/VEGFR3; the interaction is required for FLT4/VEGFR3 homodimarization and activation. Post-translationally, undergoes a complex proteolytic maturation which generates a variety of processed secreted forms with increased activity toward VEGFR-3, but only the fully processed form could activate VEGFR-2. VEGF-C first form an antiparallel homodimer linked by disulfide bonds. Before secretion, a cleavage occurs between Arg-223 and Ser-224 producing a heterotetramer. The next extracellular step of the processing removes the N-terminal propeptide. Finally the mature VEGF-C is composed mostly of two VEGF homology domains (VHDs) bound by non-covalent interactions. As to expression, highly expressed in the lung, ovary, preputial gland and the adrenal gland. Expressed in the post-pubertal mammary glands.

It localises to the secreted. Growth factor active in angiogenesis, and endothelial cell growth, stimulating their proliferation and migration and also has effects on the permeability of blood vessels. May function in angiogenesis of the venous and lymphatic vascular systems during embryogenesis, and also in the maintenance of differentiated lymphatic endothelium in adults. Binds and activates KDR/VEGFR2 and FLT4/VEGFR3 receptors. The chain is Vascular endothelial growth factor C (Vegfc) from Rattus norvegicus (Rat).